The sequence spans 202 residues: Coiled-coil domain-containing protein 85B (202 aa).

Met1 bears the N-acetylmethionine mark. Coiled coils occupy residues 43–90 (GRLM…ERQR) and 118–147 (QKLA…LGEE). The segment at 148–202 (WGPRGGPSGAGGSGAGPAPELALPPCGPRDLGDGSSSTGSVGSPDQLPLACSPDD) is disordered. Residues 150–162 (PRGGPSGAGGSGA) are compositionally biased toward gly residues. Positions 180 to 190 (DGSSSTGSVGS) are enriched in low complexity.

This sequence belongs to the CCDC85 family. Interacts with CEBPB. Interacts with EURL. May interact with CEBPD. Interacts with MCRS1. Interacts with TCF7L2; competes with CTNNB1. Interacts with ANKRD26. Interacts with the beta-catenin family proteins ARVCF, CTNND1, CTNND2 and PKP4. In terms of assembly, (Microbial infection) Interacts with the viral phosphoprotein hepatitis delta antigen (HDAG); this interaction affects hepatitis delta virus (HDV) genomic replication in intact cells. As to expression, widely expressed including liver.

It localises to the nucleus. Its subcellular location is the cytoplasm. The protein resides in the cytoskeleton. It is found in the microtubule organizing center. The protein localises to the centrosome. It localises to the cell junction. Its subcellular location is the adherens junction. Its function is as follows. Functions as a transcriptional repressor. May inhibit the activity of CTNNB1 in a TP53-dependent manner and thus regulate cell growth. May function in adipocyte differentiation, negatively regulating mitotic clonal expansion. Plays a role in cell-cell adhesion and epithelium development through its interaction with proteins of the beta-catenin family. In terms of biological role, (Microbial infection) Plays a role in hepatitis delta virus (HDV) genomic replication. This Homo sapiens (Human) protein is Coiled-coil domain-containing protein 85B (CCDC85B).